The primary structure comprises 1433 residues: CAP-Gly domain-containing linker protein 1 (1433 aa).

The tract at residues 1–51 (MSMLKPSGLKAPSKTIKHGSTLLKAPASVATAPAEKAPSSEKSSSTTTADA) is disordered. The span at 32–49 (APAEKAPSSEKSSSTTTA) shows a compositional bias: low complexity. In terms of domain architecture, CAP-Gly 1 spans 79-121 (GETQFAPGQWAGIVLDEPIGKNDGSVAGVRYFQCEPLRGIFTR). The disordered stretch occupies residues 133 to 208 (DEANGTQTAH…VSNLSEAGSL (76 aa)). Residues 140–168 (TAHASRATSPTSTSTASAVSASPAALLPS) are compositionally biased toward low complexity. Polar residues predominate over residues 184–204 (TPSQFSNLSKTASGSVSNLSE). One can recognise a CAP-Gly 2 domain in the interval 235–277 (GETDFAKGEWCGVELDEPLGKNDGAVAGTRYFQCQPRYGLFAP). Over residues 319-333 (SLSSVASSVSSKPSR) the composition is skewed to low complexity. The tract at residues 319 to 338 (SLSSVASSVSSKPSRTGLLT) is disordered. Residues 351-1353 (TTALQEALKE…CEAALNGNEE (1003 aa)) adopt a coiled-coil conformation. The CCHC-type zinc-finger motif lies at 1412-1429 (PYCDTCEMFGHWTADCND).

It is found in the cytoplasm. The protein localises to the cytoskeleton. Its subcellular location is the cytoplasmic vesicle membrane. It localises to the cell projection. The protein resides in the ruffle. Its function is as follows. Binds to the plus end of microtubules and regulates the dynamics of the microtubule cytoskeleton. Promotes microtubule growth and microtubule bundling. Links cytoplasmic vesicles to microtubules and thereby plays an important role in intracellular vesicle trafficking. Plays a role macropinocytosis and endosome trafficking. The chain is CAP-Gly domain-containing linker protein 1 (CLIP1) from Gallus gallus (Chicken).